The chain runs to 492 residues: Probable glycine dehydrogenase (decarboxylating) subunit 2 (492 aa).

At lysine 274 the chain carries N6-(pyridoxal phosphate)lysine.

The protein belongs to the GcvP family. C-terminal subunit subfamily. As to quaternary structure, the glycine cleavage system is composed of four proteins: P, T, L and H. In this organism, the P 'protein' is a heterodimer of two subunits. Pyridoxal 5'-phosphate is required as a cofactor.

It catalyses the reaction N(6)-[(R)-lipoyl]-L-lysyl-[glycine-cleavage complex H protein] + glycine + H(+) = N(6)-[(R)-S(8)-aminomethyldihydrolipoyl]-L-lysyl-[glycine-cleavage complex H protein] + CO2. Functionally, the glycine cleavage system catalyzes the degradation of glycine. The P protein binds the alpha-amino group of glycine through its pyridoxal phosphate cofactor; CO(2) is released and the remaining methylamine moiety is then transferred to the lipoamide cofactor of the H protein. This is Probable glycine dehydrogenase (decarboxylating) subunit 2 from Staphylococcus haemolyticus (strain JCSC1435).